The following is a 160-amino-acid chain: 3-dehydroquinate dehydratase (160 aa).

The active-site Proton acceptor is Tyr22. The substrate site is built by Asn73, His79, and Asp86. The active-site Proton donor is the His99. Substrate-binding positions include 100 to 101 (IS) and Arg110.

It belongs to the type-II 3-dehydroquinase family. As to quaternary structure, homododecamer.

It catalyses the reaction 3-dehydroquinate = 3-dehydroshikimate + H2O. The protein operates within metabolic intermediate biosynthesis; chorismate biosynthesis; chorismate from D-erythrose 4-phosphate and phosphoenolpyruvate: step 3/7. Functionally, catalyzes a trans-dehydration via an enolate intermediate. This is 3-dehydroquinate dehydratase from Campylobacter lari (strain RM2100 / D67 / ATCC BAA-1060).